The following is a 348-amino-acid chain: Anthranilate phosphoribosyltransferase (348 aa).

5-phospho-alpha-D-ribose 1-diphosphate-binding positions include Gly89, 92–93 (GD), Thr97, 99–102 (NIST), 117–125 (KHGNRSVSS), and Ser129. Gly89 is a binding site for anthranilate. Position 101 (Ser101) interacts with Mg(2+). Residue Asn120 participates in anthranilate binding. Arg175 provides a ligand contact to anthranilate. Residues Asp233 and Glu234 each coordinate Mg(2+).

The protein belongs to the anthranilate phosphoribosyltransferase family. Homodimer. Mg(2+) serves as cofactor.

It catalyses the reaction N-(5-phospho-beta-D-ribosyl)anthranilate + diphosphate = 5-phospho-alpha-D-ribose 1-diphosphate + anthranilate. It participates in amino-acid biosynthesis; L-tryptophan biosynthesis; L-tryptophan from chorismate: step 2/5. Catalyzes the transfer of the phosphoribosyl group of 5-phosphorylribose-1-pyrophosphate (PRPP) to anthranilate to yield N-(5'-phosphoribosyl)-anthranilate (PRA). The polypeptide is Anthranilate phosphoribosyltransferase (Shewanella sp. (strain W3-18-1)).